Consider the following 344-residue polypeptide: N-acetyl-gamma-glutamyl-phosphate reductase (344 aa).

C148 is a catalytic residue.

It belongs to the NAGSA dehydrogenase family. Type 1 subfamily.

The protein resides in the cytoplasm. It catalyses the reaction N-acetyl-L-glutamate 5-semialdehyde + phosphate + NADP(+) = N-acetyl-L-glutamyl 5-phosphate + NADPH + H(+). It functions in the pathway amino-acid biosynthesis; L-arginine biosynthesis; N(2)-acetyl-L-ornithine from L-glutamate: step 3/4. Functionally, catalyzes the NADPH-dependent reduction of N-acetyl-5-glutamyl phosphate to yield N-acetyl-L-glutamate 5-semialdehyde. The protein is N-acetyl-gamma-glutamyl-phosphate reductase of Geobacillus thermodenitrificans (strain NG80-2).